A 489-amino-acid polypeptide reads, in one-letter code: ATF/CREB activator 1 (489 aa).

A bZIP domain is found at 384–447; it reads AWKRARLLER…QKMKKISRLH (64 aa). Positions 386–406 are basic motif; that stretch reads KRARLLERNRIAASKCRQRKK. Residues 412 to 419 are leucine-zipper; the sequence is LQREFDQI.

It belongs to the bZIP family.

It is found in the nucleus. In terms of biological role, transcriptional activator of promoters containing ATF/CREB sites. Can independently stimulate transcription through ATF/CREB sites. Important for a variety of biological functions including growth on non-optimal carbon sources. Regulates the expression of COS8. Has efficient silencing blocking activities. The chain is ATF/CREB activator 1 (ACA1) from Saccharomyces cerevisiae (strain ATCC 204508 / S288c) (Baker's yeast).